A 237-amino-acid polypeptide reads, in one-letter code: MKGILVAGITAVLVAAVESLSCVQCNSWEKSCVNSIASECPSHANTSCISSSASSSLETPVRLYQNMFCSAENCSEETHITAFTVHVSAEEHFHFVSQCCQGKECSNTSDALDPPLKNVSSNAECPACYESNGTSCHGKPWKCYEEEQCVFLVAELKNDIESKSLVLKGCSNVSNATCQFLSGENKTLGGVIFRKFECANVNSLTPTSAPTTSHNVGSKASLYLLALASLLLRGLLP.

The signal sequence occupies residues 1–19; the sequence is MKGILVAGITAVLVAAVES. Residues N45, N73, N107, N118, N132, N172, N175, and N185 are each glycosylated (N-linked (GlcNAc...) asparagine). Residues 125 to 176 form the UPAR/Ly6 domain; it reads CPACYESNGTSCHGKPWKCYEEEQCVFLVAELKNDIESKSLVLKGCSNVSNA. A lipid anchor (GPI-anchor amidated asparagine) is attached at N215. The propeptide at 216-237 is removed in mature form; the sequence is VGSKASLYLLALASLLLRGLLP.

This sequence belongs to the CNF-like-inhibitor family. In terms of processing, highly N-glycosylated. Not O-glycosylated. GPI-anchored. The GPI-anchor is cleaved, leading to secretion into the colonic lumen. In terms of tissue distribution, expressed in the large intestine. Preferentially expressed on the epithelial layer exposed to the lumen (at protein level).

It is found in the cell membrane. The protein localises to the secreted. Its function is as follows. Secreted protein specifically required to prevent invasion of Gram-negative bacteria in the inner mucus layer of the colon epithelium, a portion of the large intestine which is free of commensal microbiota. Prevents invasion of flagellated microbiota by binding to the flagellum of bacteria, such as P.mirabilis, thereby inhibiting bacterial motility in the intestinal lumen. Segregation of intestinal bacteria and epithelial cells in the colon is required to preserve intestinal homeostasis. This is Ly6/PLAUR domain-containing protein 8 from Homo sapiens (Human).